The sequence spans 364 residues: MGFRLSHLSLALSFVALALAGVAIYRNTYEAIIMKNGSLLKNVSPDFDSLESGVASILTLNNNKKRNSDKYLRQQLTPEACVFSAVRAVVDSAIDAETRMGASLIRLHFHDCFVDGCDGGILLDDINGTFTGEQNSPPNANSARGYEVIAQAKQSVINTCPNVSVSCADILAIAARDSVAKLGGQTYSVALGRSDARTANFSGAINQLPAPFDNLTVQIQKFSDKNFTLREMVALAGAHTVGFARCSTVCTSGNVNPAAQLQCNCSATLTDSDLQQLDTTPTMFDKVYYDNLNSNQGIMFSDQVLTGDATTAGFVTDYSNDVNVFLGDFAAAMIKMGDLPPSAGAQLEIRDVCSRVNPTSVASM.

The first 25 residues, M1–Y25, serve as a signal peptide directing secretion. N36 is a glycosylation site (N-linked (GlcNAc...) asparagine). Cystine bridges form between C81–C160 and C112–C117. H110 functions as the Proton acceptor in the catalytic mechanism. Ca(2+) is bound by residues D111, V114, G116, and D118. 3 N-linked (GlcNAc...) asparagine glycosylation sites follow: N127, N162, and N200. 2 cysteine pairs are disulfide-bonded: C167/C353 and C246/C265. Residue P209 participates in substrate binding. Residues N214 and N226 are each glycosylated (N-linked (GlcNAc...) asparagine). Residue H239 participates in heme b binding. Residue T240 coordinates Ca(2+). The N-linked (GlcNAc...) asparagine glycan is linked to N264. 3 residues coordinate Ca(2+): D278, T280, and D285.

It belongs to the peroxidase family. Classical plant (class III) peroxidase subfamily. It depends on Ca(2+) as a cofactor. Heme b is required as a cofactor.

The protein localises to the secreted. The catalysed reaction is 2 a phenolic donor + H2O2 = 2 a phenolic radical donor + 2 H2O. Removal of H(2)O(2), oxidation of toxic reductants, biosynthesis and degradation of lignin, suberization, auxin catabolism, response to environmental stresses such as wounding, pathogen attack and oxidative stress. These functions might be dependent on each isozyme/isoform in each plant tissue. In terms of biological role, suggested to catalyze the deposition of the aromatic residues of suberin on the cell wall and thus play a role in cell-suberization. This is Suberization-associated anionic peroxidase 1 (TAP1) from Solanum lycopersicum (Tomato).